The chain runs to 341 residues: Ketol-acid reductoisomerase (NADP(+)) (341 aa).

One can recognise a KARI N-terminal Rossmann domain in the interval 3-184; the sequence is LKVYYDKDCD…GGGRSGIIET (182 aa). Residues 26 to 29, S54, and 84 to 87 each bind NADP(+); these read FGSQ and DELQ. Residue H109 is part of the active site. G135 contacts NADP(+). The KARI C-terminal knotted domain maps to 185–330; it reads TFKDETETDL…GRLRAMMPWI (146 aa). Mg(2+) is bound by residues D193, E197, E229, and E233. S254 lines the substrate pocket.

The protein belongs to the ketol-acid reductoisomerase family. Mg(2+) is required as a cofactor.

It catalyses the reaction (2R)-2,3-dihydroxy-3-methylbutanoate + NADP(+) = (2S)-2-acetolactate + NADPH + H(+). It carries out the reaction (2R,3R)-2,3-dihydroxy-3-methylpentanoate + NADP(+) = (S)-2-ethyl-2-hydroxy-3-oxobutanoate + NADPH + H(+). Its pathway is amino-acid biosynthesis; L-isoleucine biosynthesis; L-isoleucine from 2-oxobutanoate: step 2/4. It functions in the pathway amino-acid biosynthesis; L-valine biosynthesis; L-valine from pyruvate: step 2/4. In terms of biological role, involved in the biosynthesis of branched-chain amino acids (BCAA). Catalyzes an alkyl-migration followed by a ketol-acid reduction of (S)-2-acetolactate (S2AL) to yield (R)-2,3-dihydroxy-isovalerate. In the isomerase reaction, S2AL is rearranged via a Mg-dependent methyl migration to produce 3-hydroxy-3-methyl-2-ketobutyrate (HMKB). In the reductase reaction, this 2-ketoacid undergoes a metal-dependent reduction by NADPH to yield (R)-2,3-dihydroxy-isovalerate. This Helicobacter hepaticus (strain ATCC 51449 / 3B1) protein is Ketol-acid reductoisomerase (NADP(+)).